A 495-amino-acid chain; its full sequence is MASKRRNMSCSERHQKLVDENYCKKLHVQALKNINSQIRNRMVQNENDNRVERKQFLRLLQNEQFELDMEEAIQKAEENKRLKELLLKQEEKLAMELAKLKHESLKDEKMRQQVRENSIELRELEKKLKAAYMNKERAAQIAEKDAIKYEQMKRDAEIAKTMMEEHKRIIKEENAAEDKRNKVKAQYYLDLEKQLEEQEKKKQEAYEQLLKEKLMIDEIVRKIYEEDRLEKQQKLEKMNAMRRYIEEFQKEQALWRKKKREEMEEENRKIIEFANMQQQREEDRMAKVQENEEKRLQLQNALTQKLEEMLRQREDLEQVQQELYQEEQAEIYKRKLKEEAEKKLRKQKEMKQDFEEQMALKELVLQAAKEEEENFRKTMLAKFAEDDRIELMNAQKQRMKQLEHRRAVEKLIEERRQQFLADKQQELEEWQLQQRRQGFINAIIEEERLKLLKEHATNLLGYLPKGVFKKEDDIDLLGEEFRKVYQQRSEICEDK.

The interaction with BBOF1 stretch occupies residues 1–314 (MASKRRNMSC…KLEEMLRQRE (314 aa)). Residues 59 to 410 (LLQNEQFELD…QLEHRRAVEK (352 aa)) are a coiled coil. The residue at position 188 (Tyr188) is a Phosphotyrosine.

It belongs to the MNS1 family. In terms of assembly, able to form oligomers. Microtubule inner protein component of sperm flagellar doublet microtubules. Interacts with ODAD1. Interacts with BBOF1.

Its subcellular location is the nucleus. It is found in the cytoplasm. The protein resides in the cytoskeleton. It localises to the cilium axoneme. The protein localises to the flagellum axoneme. Functionally, microtubule inner protein (MIP) part of the dynein-decorated doublet microtubules (DMTs) in cilia axoneme, which is required for motile cilia beating. May play a role in the control of meiotic division and germ cell differentiation through regulation of pairing and recombination during meiosis. Required for sperm flagella assembly. May play a role in the assembly and function of the outer dynein arm-docking complex (ODA-DC). ODA-DC mediates outer dynein arms (ODA) binding onto the axonemal doublet microtubules. The chain is Meiosis-specific nuclear structural protein 1 (MNS1) from Macaca fascicularis (Crab-eating macaque).